Consider the following 501-residue polypeptide: Solute carrier family 2, facilitated glucose transporter member 5 (501 aa).

Methionine 1 is subject to N-acetylmethionine. At methionine 1–alanine 18 the chain is on the cytoplasmic side. Residues leucine 19–valine 39 traverse the membrane as a helical segment. Tyrosine 32 provides a ligand contact to D-fructose. Residues asparagine 40–threonine 68 are Extracellular-facing. Asparagine 51 carries an N-linked (GlcNAc...) asparagine glycan. Residues leucine 69–proline 91 traverse the membrane as a helical segment. The Cytoplasmic segment spans residues leucine 92–arginine 98. Residues lysine 99–serine 119 traverse the membrane as a helical segment. Over arginine 120–glutamate 126 the chain is Extracellular. Residues leucine 127 to tyrosine 149 form a helical membrane-spanning segment. Over leucine 150 to alanine 161 the chain is Cytoplasmic. Residues leucine 162 to leucine 182 form a helical membrane-spanning segment. Glutamine 167 provides a ligand contact to D-fructose. Residues arginine 183 to tryptophan 192 lie on the Extracellular side of the membrane. Residues proline 193–phenylalanine 213 traverse the membrane as a helical segment. Residues proline 214 to glutamine 277 are Cytoplasmic-facing. The helical transmembrane segment at leucine 278–tyrosine 298 threads the bilayer. Residues glutamine 288 and isoleucine 296–tyrosine 298 each bind D-fructose. Residues tyrosine 299–histidine 313 lie on the Extracellular side of the membrane. Residues valine 314–phenylalanine 334 form a helical membrane-spanning segment. The Cytoplasmic portion of the chain corresponds to valine 335–arginine 342. The chain crosses the membrane as a helical span at residues leucine 343–leucine 363. The Extracellular portion of the chain corresponds to alanine 364–tryptophan 371. A helical transmembrane segment spans residues methionine 372–isoleucine 394. Histidine 387 contributes to the D-fructose binding site. Topologically, residues proline 395–phenylalanine 412 are cytoplasmic. The helical transmembrane segment at methionine 413–isoleucine 433 threads the bilayer. Histidine 419 to tryptophan 420 is a D-fructose binding site. Residues glutamine 434–proline 439 lie on the Extracellular side of the membrane. The helical transmembrane segment at tyrosine 440–valine 460 threads the bilayer. At proline 461–glutamine 501 the chain is on the cytoplasmic side.

The protein belongs to the major facilitator superfamily. Sugar transporter (TC 2.A.1.1) family. Glucose transporter subfamily.

It localises to the apical cell membrane. It is found in the cell membrane. The protein localises to the sarcolemma. The catalysed reaction is D-fructose(out) = D-fructose(in). Its function is as follows. Functions as a fructose transporter that has only low activity with other monosaccharides. Can mediate the uptake of deoxyglucose, but with low efficiency. Essential for fructose uptake in the small intestine. Plays a role in the regulation of salt uptake and blood pressure in response to dietary fructose. Required for the development of high blood pressure in response to high dietary fructose intake. The protein is Solute carrier family 2, facilitated glucose transporter member 5 of Pongo abelii (Sumatran orangutan).